A 381-amino-acid chain; its full sequence is UDP-N-acetylglucosamine--N-acetylmuramyl-(pentapeptide) pyrophosphoryl-undecaprenol N-acetylglucosamine transferase (381 aa).

Residues 10–12, Asn124, Arg165, Ser207, Ile263, and Gln308 each bind UDP-N-acetyl-alpha-D-glucosamine; that span reads TGG.

The protein belongs to the glycosyltransferase 28 family. MurG subfamily.

It is found in the cell inner membrane. The catalysed reaction is di-trans,octa-cis-undecaprenyl diphospho-N-acetyl-alpha-D-muramoyl-L-alanyl-D-glutamyl-meso-2,6-diaminopimeloyl-D-alanyl-D-alanine + UDP-N-acetyl-alpha-D-glucosamine = di-trans,octa-cis-undecaprenyl diphospho-[N-acetyl-alpha-D-glucosaminyl-(1-&gt;4)]-N-acetyl-alpha-D-muramoyl-L-alanyl-D-glutamyl-meso-2,6-diaminopimeloyl-D-alanyl-D-alanine + UDP + H(+). Its pathway is cell wall biogenesis; peptidoglycan biosynthesis. Functionally, cell wall formation. Catalyzes the transfer of a GlcNAc subunit on undecaprenyl-pyrophosphoryl-MurNAc-pentapeptide (lipid intermediate I) to form undecaprenyl-pyrophosphoryl-MurNAc-(pentapeptide)GlcNAc (lipid intermediate II). The chain is UDP-N-acetylglucosamine--N-acetylmuramyl-(pentapeptide) pyrophosphoryl-undecaprenol N-acetylglucosamine transferase from Trichlorobacter lovleyi (strain ATCC BAA-1151 / DSM 17278 / SZ) (Geobacter lovleyi).